The following is a 222-amino-acid chain: Uclacyanin-3 (222 aa).

An N-terminal signal peptide occupies residues 1–21 (MGSTVAAALLLFLAAVPAVFA). One can recognise a Phytocyanin domain in the interval 22–120 (ATFKVGDISG…GMKLAVPVLA (99 aa)). Cu cation-binding residues include His61, Cys102, His107, and Met112. Residues Cys74 and Cys108 are joined by a disulfide bond. The interval 121-198 (AAPSPSTPSS…APLPPSLSPN (78 aa)) is disordered. 2 stretches are compositionally biased toward pro residues: residues 125–172 (PSTP…PSAS) and 185–195 (TPPPAPLPPSL). Residue Asn198 is the site of GPI-anchor amidated asparagine attachment. Positions 199 to 222 (AASKGVMSYGIIGVTMILMYAVMT) are cleaved as a propeptide — removed in mature form.

It localises to the cell membrane. Functionally, probably acts as an electron carrier involved in oxygen activation and/or lignin formation. This is Uclacyanin-3 (UCC3) from Arabidopsis thaliana (Mouse-ear cress).